The primary structure comprises 562 residues: Dihydroxy-acid dehydratase (562 aa).

Residue aspartate 80 coordinates Mg(2+). Cysteine 121 contacts [2Fe-2S] cluster. Residues aspartate 122 and lysine 123 each contribute to the Mg(2+) site. Lysine 123 carries the post-translational modification N6-carboxylysine. Cysteine 194 serves as a coordination point for [2Fe-2S] cluster. A Mg(2+)-binding site is contributed by glutamate 446. Serine 472 (proton acceptor) is an active-site residue.

This sequence belongs to the IlvD/Edd family. In terms of assembly, homodimer. [2Fe-2S] cluster is required as a cofactor. Mg(2+) serves as cofactor.

It catalyses the reaction (2R)-2,3-dihydroxy-3-methylbutanoate = 3-methyl-2-oxobutanoate + H2O. The catalysed reaction is (2R,3R)-2,3-dihydroxy-3-methylpentanoate = (S)-3-methyl-2-oxopentanoate + H2O. It participates in amino-acid biosynthesis; L-isoleucine biosynthesis; L-isoleucine from 2-oxobutanoate: step 3/4. The protein operates within amino-acid biosynthesis; L-valine biosynthesis; L-valine from pyruvate: step 3/4. Its function is as follows. Functions in the biosynthesis of branched-chain amino acids. Catalyzes the dehydration of (2R,3R)-2,3-dihydroxy-3-methylpentanoate (2,3-dihydroxy-3-methylvalerate) into 2-oxo-3-methylpentanoate (2-oxo-3-methylvalerate) and of (2R)-2,3-dihydroxy-3-methylbutanoate (2,3-dihydroxyisovalerate) into 2-oxo-3-methylbutanoate (2-oxoisovalerate), the penultimate precursor to L-isoleucine and L-valine, respectively. The chain is Dihydroxy-acid dehydratase from Staphylococcus aureus (strain USA300 / TCH1516).